The primary structure comprises 191 residues: UPF0312 protein Sbal_3041 (191 aa).

Residues 1–22 form the signal peptide; that stretch reads MKKQLLSALIGASLLAPMAASA.

This sequence belongs to the UPF0312 family. Type 1 subfamily.

It localises to the periplasm. This is UPF0312 protein Sbal_3041 from Shewanella baltica (strain OS155 / ATCC BAA-1091).